The following is a 420-amino-acid chain: Acetylornithine aminotransferase (420 aa).

Residues G118–A119 and F151 each bind pyridoxal 5'-phosphate. Position 154 (R154) interacts with N(2)-acetyl-L-ornithine. Pyridoxal 5'-phosphate is bound at residue D242 to Q245. The residue at position 271 (K271) is an N6-(pyridoxal phosphate)lysine. Position 298 (S298) interacts with N(2)-acetyl-L-ornithine. T299 contributes to the pyridoxal 5'-phosphate binding site.

It belongs to the class-III pyridoxal-phosphate-dependent aminotransferase family. ArgD subfamily. In terms of assembly, homodimer. Requires pyridoxal 5'-phosphate as cofactor.

The protein resides in the cytoplasm. It catalyses the reaction N(2)-acetyl-L-ornithine + 2-oxoglutarate = N-acetyl-L-glutamate 5-semialdehyde + L-glutamate. It participates in amino-acid biosynthesis; L-arginine biosynthesis; N(2)-acetyl-L-ornithine from L-glutamate: step 4/4. In Parasynechococcus marenigrum (strain WH8102), this protein is Acetylornithine aminotransferase.